A 274-amino-acid chain; its full sequence is NAD(P)H dehydrogenase [quinone] 1 (274 aa).

At Ala-2 the chain carries N-acetylalanine. FAD contacts are provided by residues His-12, Phe-18–Asn-19, and Gln-67. Position 82 is a phosphoserine (Ser-82). Leu-104 to Phe-107 lines the FAD pocket. Ala-126–Thr-128 serves as a coordination point for substrate. FAD contacts are provided by residues Thr-148–Gly-151, Tyr-156, and Arg-201. The segment at Pro-225–Lys-274 is important for apoenzyme conformational stability. A Glycyl lysine isopeptide (Lys-Gly) (interchain with G-Cter in SUMO2) cross-link involves residue Lys-251.

Belongs to the NAD(P)H dehydrogenase (quinone) family. As to quaternary structure, homodimer. Interacts with PDLIM4 isoform 2; this interaction stabilizes PDLIM4 isoform 2 in response to oxidative stress and protects it from ubiquitin-independent degradation by the core 20S proteasome. Interacts with TP73 (via SAM domain); this interaction is NADH-dependent, stabilizes TP73 in response to oxidative stress and protects it from ubiquitin-independent degradation by the 20S proteasome. Interacts with TP53; this interaction is NADH-dependent, stabilizes TP53 in response to oxidative stress and protects it from ubiquitin-independent degradation by the 20S proteasome. Requires FAD as cofactor.

The protein localises to the cytoplasm. The protein resides in the cytosol. The enzyme catalyses a quinone + NADH + H(+) = a quinol + NAD(+). The catalysed reaction is a quinone + NADPH + H(+) = a quinol + NADP(+). It catalyses the reaction ubiquinone-10 + NADH + H(+) = ubiquinol-10 + NAD(+). It carries out the reaction menadione + NADH + H(+) = menadiol + NAD(+). In terms of biological role, flavin-containing quinone reductase that catalyzes two-electron reduction of quinones to hydroquinones using either NADH or NADPH as electron donors. In a ping-pong kinetic mechanism, the electrons are sequentially transferred from NAD(P)H to flavin cofactor and then from reduced flavin to the quinone, bypassing the formation of semiquinone and reactive oxygen species. Regulates cellular redox state primarily through quinone detoxification. Reduces components of plasma membrane redox system such as coenzyme Q and vitamin quinones, producing antioxidant hydroquinone forms. In the process may function as superoxide scavenger to prevent hydroquinone oxidation and facilitate excretion. Alternatively, can activate quinones and their derivatives by generating redox reactive hydroquinones with DNA cross-linking antitumor potential. Acts as a gatekeeper of the core 20S proteasome known to degrade proteins with unstructured regions. Upon oxidative stress, interacts with tumor suppressors TP53 and TP73 in a NADH-dependent way and inhibits their ubiquitin-independent degradation by the 20S proteasome. The sequence is that of NAD(P)H dehydrogenase [quinone] 1 (Nqo1) from Rattus norvegicus (Rat).